The following is a 317-amino-acid chain: Putative 2-hydroxyacid dehydrogenase SAR2389 (317 aa).

Residues 155-156 (EI), 234-236 (ASR), and D260 contribute to the NAD(+) site. Residue R236 is part of the active site. Residue E265 is part of the active site. H283 (proton donor) is an active-site residue. 283 to 286 (HIGN) contacts NAD(+).

This sequence belongs to the D-isomer specific 2-hydroxyacid dehydrogenase family.

This is Putative 2-hydroxyacid dehydrogenase SAR2389 from Staphylococcus aureus (strain MRSA252).